A 272-amino-acid chain; its full sequence is Shikimate dehydrogenase (NADP(+)) (272 aa).

Shikimate is bound by residues 14–16 (SKS) and threonine 61. The Proton acceptor role is filled by lysine 65. Glutamate 77 serves as a coordination point for NADP(+). The shikimate site is built by asparagine 86 and aspartate 102. Residues 126–130 (GAGGA), 149–154 (NRTVSR), and methionine 213 contribute to the NADP(+) site. Residue tyrosine 215 participates in shikimate binding. An NADP(+)-binding site is contributed by glycine 237.

It belongs to the shikimate dehydrogenase family. Homodimer.

It catalyses the reaction shikimate + NADP(+) = 3-dehydroshikimate + NADPH + H(+). It participates in metabolic intermediate biosynthesis; chorismate biosynthesis; chorismate from D-erythrose 4-phosphate and phosphoenolpyruvate: step 4/7. In terms of biological role, involved in the biosynthesis of the chorismate, which leads to the biosynthesis of aromatic amino acids. Catalyzes the reversible NADPH linked reduction of 3-dehydroshikimate (DHSA) to yield shikimate (SA). In Shigella flexneri serotype 5b (strain 8401), this protein is Shikimate dehydrogenase (NADP(+)).